The primary structure comprises 1607 residues: Dicer-like protein 1 (1607 aa).

The tract at residues 1–74 (MNAEMREGSS…PDTKKWIVND (74 aa)) is disordered. The Helicase ATP-binding domain occupies 142-324 (LFERAKTQNT…IARSPELEGL (183 aa)). 155-162 (LDTGSGKT) contributes to the ATP binding site. The short motif at 267–270 (DEAH) is the DEAH box element. In terms of domain architecture, Helicase C-terminal spans 461–632 (KVVILLRILR…EALPADRKLT (172 aa)). One can recognise a Dicer dsRNA-binding fold domain in the interval 665–755 (SLICLAAFVA…RPTFTKQLPA (91 aa)). The 136-residue stretch at 905–1040 (GAVTFVRDNE…IVLEPLRISP (136 aa)) folds into the PAZ domain. RNase III domains lie at 1063-1219 (LVAL…LTAQ) and 1272-1447 (AARF…VDSR). Residues glutamate 1312, aspartate 1433, and glutamate 1436 each contribute to the Mg(2+) site. Residues 1478-1556 (HPVTFLAGIM…AKKAIQVLEG (79 aa)) form the DRBM domain. The Zn(2+) site is built by cysteine 1493, histidine 1527, cysteine 1568, and cysteine 1570.

The protein belongs to the helicase family. Dicer subfamily. The cofactor is Mg(2+). Mn(2+) serves as cofactor.

Its function is as follows. Dicer-like endonuclease involved in cleaving double-stranded RNA in the RNA interference (RNAi) pathway. Produces 21 to 25 bp dsRNAs (siRNAs) which target the selective destruction of homologous RNAs leading to sequence-specific suppression of gene expression, called post-transcriptional gene silencing (PTGS). Part of a broad host defense response against viral infection and transposons. The chain is Dicer-like protein 1 (DCL1) from Chaetomium globosum (strain ATCC 6205 / CBS 148.51 / DSM 1962 / NBRC 6347 / NRRL 1970) (Soil fungus).